The sequence spans 470 residues: Origin of replication complex subunit 4 (470 aa).

Residue 63–70 (GPRGCGKA) participates in ATP binding.

It belongs to the ORC4 family. Component of the origin recognition complex (ORC) composed of at least ORC1, ORC2, ORC3, ORC4, ORC5 and ORC6. ORC is regulated in a cell-cycle and development dependent manner. It is sequentially assembled at the exit from anaphase of mitosis and disassembled as cells enter S phase. As to expression, expressed in the shoot apical meristem (SAM), leaves, ears and roots (including root tips).

The protein localises to the nucleus. In terms of biological role, component of the origin recognition complex (ORC) that binds origins of replication. DNA-binding is ATP-dependent. The specific DNA sequences that define origins of replication have not been identified yet. ORC is required to assemble the pre-replication complex necessary to initiate DNA replication. The polypeptide is Origin of replication complex subunit 4 (Oryza sativa subsp. japonica (Rice)).